Reading from the N-terminus, the 482-residue chain is G2/mitotic-specific cyclin cdc13 (482 aa).

Composition is skewed to polar residues over residues 35-55 (LHSSENSLVNGKKATVSSTNV), 78-92 (SKNTNVRHTTASVST), and 118-140 (SVFNSSVPSLPQHLSTKSHSVST). Positions 35–140 (LHSSENSLVN…LSTKSHSVST (106 aa)) are disordered. A Cyclin N-terminal domain is found at 206-332 (DIFEYLNELE…ILRVLEFNLA (127 aa)).

This sequence belongs to the cyclin family. Cyclin AB subfamily. Interacts with cdc2. Interacts with rum1. Associates with microtubules. Also interacts with cdc11.

The protein localises to the nucleus. It localises to the cytoplasm. Its subcellular location is the cytoskeleton. The protein resides in the microtubule organizing center. It is found in the spindle pole body. In terms of biological role, essential for the control of the cell cycle at the G2/M (mitosis) transition. Interacts with the cdc2 protein kinase to form MPF. G2/M cyclins accumulate steadily during G2 and are abruptly destroyed at mitosis. Involved in the reorganization of the cytoskeleton on transition from G2 to mitosis. Association with rum1 promotes its proteolysis during G1. Also essential for initiation of meiosis II. The chain is G2/mitotic-specific cyclin cdc13 from Schizosaccharomyces pombe (strain 972 / ATCC 24843) (Fission yeast).